Reading from the N-terminus, the 856-residue chain is Lon protease homolog 2, peroxisomal (856 aa).

The Lon N-terminal domain occupies 13–222 (LPLLLTHEGV…VTIPLLLRQI (210 aa)). 379-386 (GPPGVGKT) contacts ATP. Residues 586-608 (GQHREHKSEHLEAPEGEERKESV) show a composition bias toward basic and acidic residues. Positions 586–614 (GQHREHKSEHLEAPEGEERKESVPEGSKS) are disordered. The region spanning 655 to 841 (LNQPGVAIGL…DEVLNAAFDG (187 aa)) is the Lon proteolytic domain. Active-site residues include Ser747 and Lys790. Residues 854–856 (SKL) carry the Microbody targeting signal motif.

This sequence belongs to the peptidase S16 family.

The protein resides in the peroxisome matrix. The catalysed reaction is Hydrolysis of proteins in presence of ATP.. In terms of biological role, ATP-dependent serine protease that mediates the selective degradation of misfolded and unassembled polypeptides in the peroxisomal matrix. Necessary for type 2 peroxisome targeting signal (PTS2)-containing protein processing and facilitates peroxisome matrix protein import. The sequence is that of Lon protease homolog 2, peroxisomal (lonp2) from Xenopus laevis (African clawed frog).